The following is a 588-amino-acid chain: Aspartate--tRNA ligase (588 aa).

E174 is a binding site for L-aspartate. An aspartate region spans residues Q198–K201. Position 220 (R220) interacts with L-aspartate. ATP contacts are provided by residues R220–E222 and Q229. H448 contacts L-aspartate. Residue E482 participates in ATP binding. Residue R489 participates in L-aspartate binding. Position 534–537 (G534–R537) interacts with ATP.

The protein belongs to the class-II aminoacyl-tRNA synthetase family. Type 1 subfamily. In terms of assembly, homodimer.

The protein resides in the cytoplasm. It carries out the reaction tRNA(Asp) + L-aspartate + ATP = L-aspartyl-tRNA(Asp) + AMP + diphosphate. In terms of biological role, catalyzes the attachment of L-aspartate to tRNA(Asp) in a two-step reaction: L-aspartate is first activated by ATP to form Asp-AMP and then transferred to the acceptor end of tRNA(Asp). The polypeptide is Aspartate--tRNA ligase (Exiguobacterium sibiricum (strain DSM 17290 / CCUG 55495 / CIP 109462 / JCM 13490 / 255-15)).